The chain runs to 404 residues: Aspergillopepsin-1 (404 aa).

An N-terminal signal peptide occupies residues 1 to 20 (MVILSKVAAVAVGLSTVASA). Residues 21–77 (LPTGPSHSPHARRGFTINQITRQTARVGPKTASFPAIYSRALAKYGGTVPAHLKSAV) constitute a propeptide, activation peptide. The Peptidase A1 domain maps to 95–401 (YLTPVNIGGT…DSQGPRLGFA (307 aa)). Aspartate 111 is a catalytic residue. A glycan (N-linked (GlcNAc...) asparagine) is linked at asparagine 140. Aspartate 293 is a catalytic residue. The cysteines at positions 329 and 364 are disulfide-linked.

It belongs to the peptidase A1 family. In terms of assembly, monomer.

The protein localises to the secreted. The enzyme catalyses Hydrolysis of proteins with broad specificity. Generally favors hydrophobic residues in P1 and P1', but also accepts Lys in P1, which leads to activation of trypsinogen. Does not clot milk.. Functionally, secreted aspartic endopeptidase that allows assimilation of proteinaceous substrates. The scissile peptide bond is attacked by a nucleophilic water molecule activated by two aspartic residues in the active site. Shows a broad primary substrate specificity. Favors hydrophobic residues at the P1 and P1' positions, but also accepts a lysine residue in the P1 position, leading to the activation of trypsinogen and chymotrypsinogen A. The protein is Aspergillopepsin-1 (pepA) of Aspergillus flavus (strain ATCC 200026 / FGSC A1120 / IAM 13836 / NRRL 3357 / JCM 12722 / SRRC 167).